The chain runs to 82 residues: uncharacterized protein (82 aa).

The protein belongs to the chlamydial CPn_0711/CT_665/TC_0036 family.

This is an uncharacterized protein from Chlamydia pneumoniae (Chlamydophila pneumoniae).